A 282-amino-acid polypeptide reads, in one-letter code: sn-glycerol-3-phosphate transport system permease protein UgpE (282 aa).

A run of 6 helical transmembrane segments spans residues 14-34, 86-106, 112-132, 146-168, 201-221, and 248-268; these read LILILGIIIVAFPIYYTFVAS, MAIAVGKIIISFMSAFAIVFF, MFFFWMIFITLMLPVEVRILP, YAGLTLPLMASATATFLFRQFFL, IAALFVILFIYGWTQYLWPLL, and WNYVMVTAILAIIPLILVVVL. The ABC transmembrane type-1 domain maps to 78-269; that stretch reads LWNSFVVAMA…IPLILVVVLM (192 aa).

This sequence belongs to the binding-protein-dependent transport system permease family. The complex is composed of two ATP-binding proteins (UgpC), two transmembrane proteins (UgpA and UgpE) and a solute-binding protein (UgpB).

Its subcellular location is the cell inner membrane. In terms of biological role, part of the ABC transporter complex UgpBAEC involved in sn-glycerol-3-phosphate (G3P) import. Probably responsible for the translocation of the substrate across the membrane. This chain is sn-glycerol-3-phosphate transport system permease protein UgpE (ugpE), found in Brucella abortus (strain 2308).